The chain runs to 378 residues: Wnt inhibitory factor 1 (378 aa).

An N-terminal signal peptide occupies residues 1 to 28; that stretch reads MAFRTPAVQLHLKACVLLLLGGLLEAAY. A WIF domain is found at 36-175; the sequence is MWIDANQARI…PHNAIFFKTC (140 aa). N-linked (GlcNAc...) asparagine glycosylation is present at Asn-86. Disulfide bonds link Cys-138-Cys-175, Cys-180-Cys-190, Cys-184-Cys-196, Cys-212-Cys-222, Cys-216-Cys-228, and Cys-230-Cys-239. EGF-like domains follow at residues 176-205, 208-240, 243-272, 272-304, and 305-336; these read QRAK…FYGV, EKAL…SSCE, NCST…VRCE, ELSK…DLCS, and KAVC…RHCN. Asn-243 carries an N-linked (GlcNAc...) asparagine glycan. Disulfide bonds link Cys-244-Cys-254, Cys-248-Cys-260, Cys-262-Cys-271, Cys-276-Cys-286, Cys-280-Cys-292, Cys-294-Cys-303, Cys-308-Cys-318, Cys-312-Cys-324, and Cys-326-Cys-335. Positions 343 to 378 are disordered; that stretch reads VSNSQRVSPSKHKSPSVAAAKEAPETSQPSETNYVV. Residues 367-378 show a composition bias toward polar residues; that stretch reads ETSQPSETNYVV.

As to expression, highly expressed in unsegmented paraxial mesoderm.

It is found in the secreted. In terms of biological role, binds to WNT proteins and inhibits their activities. May be involved in mesoderm segmentation. This is Wnt inhibitory factor 1 (wif1) from Danio rerio (Zebrafish).